Reading from the N-terminus, the 48-residue chain is ATP synthase protein 8 (48 aa).

Residues 12-32 traverse the membrane as a helical segment; sequence QLTYGLLLITVLLILFSQFFL.

Belongs to the ATPase protein 8 family. As to quaternary structure, F-type ATPases have 2 components, CF(1) - the catalytic core - and CF(0) - the membrane proton channel.

The protein localises to the mitochondrion membrane. Functionally, mitochondrial membrane ATP synthase (F(1)F(0) ATP synthase or Complex V) produces ATP from ADP in the presence of a proton gradient across the membrane which is generated by electron transport complexes of the respiratory chain. F-type ATPases consist of two structural domains, F(1) - containing the extramembraneous catalytic core and F(0) - containing the membrane proton channel, linked together by a central stalk and a peripheral stalk. During catalysis, ATP synthesis in the catalytic domain of F(1) is coupled via a rotary mechanism of the central stalk subunits to proton translocation. Part of the complex F(0) domain. Minor subunit located with subunit a in the membrane. This Candida glabrata (strain ATCC 2001 / BCRC 20586 / JCM 3761 / NBRC 0622 / NRRL Y-65 / CBS 138) (Yeast) protein is ATP synthase protein 8 (ATP8).